The sequence spans 438 residues: Methyl-coenzyme M reductase subunit beta (438 aa).

Position 367 (Tyr-367) interacts with coenzyme M. Gly-369 contacts coenzyme B.

This sequence belongs to the methyl-coenzyme M reductase beta subunit family. MCR is a hexamer of two alpha, two beta, and two gamma chains, forming a dimer of heterotrimers. Coenzyme F430 serves as cofactor.

It is found in the cytoplasm. It carries out the reaction coenzyme B + methyl-coenzyme M = methane + coenzyme M-coenzyme B heterodisulfide. It functions in the pathway one-carbon metabolism; methyl-coenzyme M reduction; methane from methyl-coenzyme M: step 1/1. Its function is as follows. Component of the methyl-coenzyme M reductase (MCR) I that catalyzes the reductive cleavage of methyl-coenzyme M (CoM-S-CH3 or 2-(methylthio)ethanesulfonate) using coenzyme B (CoB or 7-mercaptoheptanoylthreonine phosphate) as reductant which results in the production of methane and the mixed heterodisulfide of CoB and CoM (CoM-S-S-CoB). This is the final step in methanogenesis. In Methanothermus fervidus, this protein is Methyl-coenzyme M reductase subunit beta (mcrB).